Reading from the N-terminus, the 274-residue chain is 2,3,4,5-tetrahydropyridine-2,6-dicarboxylate N-succinyltransferase (274 aa).

Substrate is bound by residues arginine 106 and aspartate 143.

It belongs to the transferase hexapeptide repeat family. In terms of assembly, homotrimer.

The protein localises to the cytoplasm. It catalyses the reaction (S)-2,3,4,5-tetrahydrodipicolinate + succinyl-CoA + H2O = (S)-2-succinylamino-6-oxoheptanedioate + CoA. The protein operates within amino-acid biosynthesis; L-lysine biosynthesis via DAP pathway; LL-2,6-diaminopimelate from (S)-tetrahydrodipicolinate (succinylase route): step 1/3. This chain is 2,3,4,5-tetrahydropyridine-2,6-dicarboxylate N-succinyltransferase, found in Rickettsia prowazekii (strain Madrid E).